Reading from the N-terminus, the 255-residue chain is Myogenic factor 5 (255 aa).

A bHLH domain is found at 83–134 (DRRKAATMRERRRLKKVNQAFETLKRCTTTNPNQRLPKVEILRNAIQYIESL). The span at 221–242 (SLPIPDSITPSPTSSTDSLPRS) shows a compositional bias: low complexity. The interval 221–246 (SLPIPDSITPSPTSSTDSLPRSPDAH) is disordered.

Efficient DNA binding requires dimerization with another bHLH protein.

The protein resides in the nucleus. In terms of biological role, acts as a transcriptional activator that promotes transcription of muscle-specific target genes and plays a role in muscle differentiation. Induces fibroblasts to differentiate into myoblasts. Probable sequence specific DNA-binding protein. The protein is Myogenic factor 5 (myf5) of Xenopus laevis (African clawed frog).